A 417-amino-acid polypeptide reads, in one-letter code: MTGTLPTQFKDSDLSPLTRPNALGRFGKYGGQYVPETLIPALIELEQAAKEAWKDSSFNSELNHLLKTYVGRSTPLYEATRLTEHYRKNTLKGPRIWLKREDLNHTGAHKINNALGQALLAIRMGKKRIIAETGAGQHGVATATVCARFGLECIIYMGKEDMRRQALNVFRMQLLGASVRPVTSGTATLKDATSEAIRDWVTNVETTHYILGSVAGPHPYPMLVRDFHAVIGEETKQQCKQAFGRSPDVLLACVGGGSNAMGLFHSFVEDKSVRMIGVEAAGDGVETGRHAATITEGRVGVLHGAMSLLLQDKDGQVEEAHSISAGLDYPGVGPEHSYLKEIGRAEYAAVTDTEAIEALQLVSKLEGIIPALETAHAFAYLEKLCPTLNHNSEIVINCSGRGDKDVNTVAEKLGSEI.

Residue K110 is modified to N6-(pyridoxal phosphate)lysine.

The protein belongs to the TrpB family. As to quaternary structure, tetramer of two alpha and two beta chains. Pyridoxal 5'-phosphate serves as cofactor.

It carries out the reaction (1S,2R)-1-C-(indol-3-yl)glycerol 3-phosphate + L-serine = D-glyceraldehyde 3-phosphate + L-tryptophan + H2O. It functions in the pathway amino-acid biosynthesis; L-tryptophan biosynthesis; L-tryptophan from chorismate: step 5/5. Its function is as follows. The beta subunit is responsible for the synthesis of L-tryptophan from indole and L-serine. The polypeptide is Tryptophan synthase beta chain (Prochlorococcus marinus (strain NATL1A)).